A 250-amino-acid polypeptide reads, in one-letter code: Small ribosomal subunit protein uS2 (250 aa).

Belongs to the universal ribosomal protein uS2 family.

The protein is Small ribosomal subunit protein uS2 of Paraburkholderia phytofirmans (strain DSM 17436 / LMG 22146 / PsJN) (Burkholderia phytofirmans).